The following is a 132-amino-acid chain: Neurophysin 2 (132 aa).

Cystine bridges form between cysteine 10-cysteine 54, cysteine 13-cysteine 27, cysteine 21-cysteine 44, cysteine 28-cysteine 34, cysteine 61-cysteine 73, cysteine 67-cysteine 85, and cysteine 74-cysteine 79.

It belongs to the vasopressin/oxytocin family.

The protein localises to the secreted. Functionally, neurophysin 2 specifically binds vasopressin. The chain is Neurophysin 2 from Struthio camelus (Common ostrich).